The sequence spans 20 residues: Short cationic peptide-6a (20 aa).

Ser-20 is subject to Serine amide.

As to expression, expressed by the venom gland.

Its subcellular location is the secreted. This is Short cationic peptide-6a from Cupiennius salei (American wandering spider).